The following is a 402-amino-acid chain: Advanced glycosylation end product-specific receptor (402 aa).

A signal peptide spans 1–22 (MPTGTVARAWVLVLALWGAVAG). An Ig-like V-type domain is found at 23–109 (GQNITARIGE…ATNRLGKEVK (87 aa)). At 23-341 (GQNITARIGE…DGSGLGTLAL (319 aa)) the chain is on the extracellular side. Residues Asn25 and Asn80 are each glycosylated (N-linked (GlcNAc...) asparagine). 2 cysteine pairs are disulfide-bonded: Cys38–Cys98 and Cys143–Cys206. Ig-like C2-type domains are found at residues 123 to 219 (PEIV…RPLN) and 233 to 315 (PEGI…PPVN). The helical transmembrane segment at 342–362 (ALGILGGLGIAALLIGAILWR) threads the bilayer. Topologically, residues 363-402 (KRQPRLEERKAPESQEDEEERAELNQSEEAEMPENGAGGP) are cytoplasmic. Positions 368–402 (LEERKAPESQEDEEERAELNQSEEAEMPENGAGGP) are disordered. Ser376 and Ser389 each carry phosphoserine. Acidic residues predominate over residues 376–394 (SQEDEEERAELNQSEEAEM).

In terms of assembly, constitutive homodimer; disulfide-linked. Forms homooligomers. Interacts with S100A1 and APP. Interacts with S100B, S100A12 and S100A14. Interacts with TIRAP. Interacts with HMGB1. Interacts with LGP2; this interaction plays an important role in AGER-mediated pro-inflammatory responses and cytokine release. Interacts with double-strand break repair protein MRE11 which is a core component of the MRN complex; the interaction enhances MRE11 endonuclease activity and promotes DNA repair. Interacts with the MCM2-7 complex via interaction with complex member MCM2; the interaction is increased following DNA replication stress and stabilizes the MCM2-7 complex at replication forks. Post-translationally, phosphorylated on its cytoplasmic domain by PKCzeta/PRKCZ upon ligand binding. Phosphorylated by ATM following DNA damage. In terms of processing, targeted by the ubiquitin E3 ligase subunit FBXO10 to mediate its ubiquitination and degradation. In terms of tissue distribution, endothelial cells and cardiomyocytes. Expressed in brain.

Its subcellular location is the cell membrane. The protein localises to the cell projection. It localises to the phagocytic cup. The protein resides in the early endosome. It is found in the nucleus. Cell surface pattern recognition receptor that senses endogenous stress signals with a broad ligand repertoire including advanced glycation end products, S100 proteins, high-mobility group box 1 protein/HMGB1, amyloid beta/APP oligomers, nucleic acids, histones, phospholipids and glycosaminoglycans. Advanced glycosylation end products are nonenzymatically glycosylated proteins which accumulate in vascular tissue in aging and at an accelerated rate in diabetes. These ligands accumulate at inflammatory sites during the pathogenesis of various diseases including diabetes, vascular complications, neurodegenerative disorders and cancers, and RAGE transduces their binding into pro-inflammatory responses. Upon ligand binding, uses TIRAP and MYD88 as adapters to transduce the signal ultimately leading to the induction of inflammatory cytokines IL6, IL8 and TNFalpha through activation of NF-kappa-B. Interaction with S100A12 on endothelium, mononuclear phagocytes, and lymphocytes triggers cellular activation, with generation of key pro-inflammatory mediators. Interaction with S100B after myocardial infarction may play a role in myocyte apoptosis by activating ERK1/2 and p53/TP53 signaling. Contributes to the translocation of amyloid-beta peptide (ABPP) across the cell membrane from the extracellular to the intracellular space in cortical neurons. ABPP-initiated RAGE signaling, especially stimulation of p38 mitogen-activated protein kinase (MAPK), has the capacity to drive a transport system delivering ABPP as a complex with RAGE to the intraneuronal space. Participates in endothelial albumin transcytosis together with HMGB1 through the RAGE/SRC/Caveolin-1 pathway, leading to endothelial hyperpermeability. Mediates the loading of HMGB1 in extracellular vesicles (EVs) that shuttle HMGB1 to hepatocytes by transferrin-mediated endocytosis and subsequently promote hepatocyte pyroptosis by activating the NLRP3 inflammasome. Binds to DNA and promotes extracellular hypomethylated DNA (CpG DNA) uptake by cells via the endosomal route to activate inflammatory responses. Mediates phagocytosis by non-professional phagocytes (NPP) and this is enhanced by binding to ligands including RNA, DNA, HMGB1 and histones. Promotes NPP-mediated phagocytosis of Saccharomyces cerevisiae spores by binding to RNA attached to the spore wall. Also promotes NPP-mediated phagocytosis of apoptotic cells. Following DNA damage, recruited to DNA double-strand break sites where it colocalizes with the MRN repair complex via interaction with double-strand break repair protein MRE11. Enhances the endonuclease activity of MRE11, promoting the end resection of damaged DNA. Promotes DNA damage repair in trophoblasts which enhances trophoblast invasion and contributes to placental development and maintenance. Protects cells from DNA replication stress by localizing to damaged replication forks where it stabilizes the MCM2-7 complex and promotes faithful progression of the replication fork. This chain is Advanced glycosylation end product-specific receptor (Ager), found in Rattus norvegicus (Rat).